Reading from the N-terminus, the 134-residue chain is Complexin-1 (134 aa).

Disordered stretches follow at residues methionine 1–glutamate 60 and lysine 74–glutamate 114. Residues aspartate 15–glutamate 60 are compositionally biased toward basic and acidic residues. A coiled-coil region spans residues aspartate 29–glutamine 64. Positions arginine 48 to tyrosine 70 are interaction with the SNARE complex.

It belongs to the complexin/synaphin family. As to quaternary structure, binds to the SNARE core complex containing SNAP25, VAMP2 and STX1A. In terms of tissue distribution, nervous system, and pancreatic islet cells. Present in many brain regions, including hippocampus and cerebellum. In the retina, present at conventional amacrine cell synapses (at protein level).

The protein localises to the cytoplasm. Its subcellular location is the cytosol. It is found in the perikaryon. The protein resides in the presynapse. Its function is as follows. Positively regulates a late step in exocytosis of various cytoplasmic vesicles, such as synaptic vesicles and other secretory vesicles. Organizes the SNAREs into a cross-linked zigzag topology that, when interposed between the vesicle and plasma membranes, is incompatible with fusion, thereby preventing SNAREs from releasing neurotransmitters until an action potential arrives at the synapse. Also involved in glucose-induced secretion of insulin by pancreatic beta-cells. Essential for motor behavior. This chain is Complexin-1 (Cplx1), found in Mus musculus (Mouse).